Reading from the N-terminus, the 646-residue chain is Secretogranin-1 (646 aa).

The signal sequence occupies residues 1 to 20 (MQPAALLGLLGATVVAAVSS). An intrachain disulfide couples cysteine 36 to cysteine 57. Over residues 67 to 90 (ELKNEEKSENENTRFEVRLLRDPA) the composition is skewed to basic and acidic residues. The interval 67 to 483 (ELKNEEKSEN…GKQYAPHHIT (417 aa)) is disordered. A Phosphoserine modification is found at serine 74. A phosphothreonine mark is found at threonine 79 and threonine 92. 4 positions are modified to phosphoserine: serine 93, serine 99, serine 100, and serine 104. A glycan (O-linked (Xyl...) (chondroitin sulfate) serine) is linked at serine 93. O-linked (GalNAc...) threonine glycosylation is present at threonine 113. Basic and acidic residues-rich tracts occupy residues 119–128 (SGGHSRERAG) and 137–173 (KEAKTRYSKSEGQNREEEMVKYQKRERGEVGSEERLS). 3 positions are modified to phosphoserine: serine 123, serine 146, and serine 168. Polar residues predominate over residues 182 to 191 (AFLNQRNQTP). Residue threonine 190 is glycosylated (O-linked (GalNAc...) threonine). Serine 205 carries the post-translational modification Phosphoserine. A compositionally biased stretch (basic and acidic residues) spans 208–228 (GLEKSHSRERSSQESGEETKS). The O-linked (Xyl...) (chondroitin sulfate) serine glycan is linked to serine 222. The segment covering 260–270 (RHSRPRHHHGR) has biased composition (basic residues). Phosphoserine is present on residues serine 276, serine 277, and serine 295. Sulfotyrosine is present on tyrosine 315. Over residues 340–361 (GRGEHQALRRPSEESLEQENKR) the composition is skewed to basic and acidic residues. Residues serine 351 and serine 354 each carry the phosphoserine modification. Phosphotyrosine is present on tyrosine 374. Residues serine 375 and serine 378 each carry the phosphoserine modification. The span at 406-425 (TDEKRFLGETHHRVQESQRD) shows a compositional bias: basic and acidic residues. At tyrosine 441 the chain carries Sulfotyrosine. Composition is skewed to basic and acidic residues over residues 442–451 (GEEKGEEAAR) and 459–472 (DPRDADENREEARL). Pyrrolidone carboxylic acid; in secretogranin-1(476-566) is present on glutamine 476. Serine 502, serine 503, and serine 514 each carry phosphoserine. Tyrosine 535 carries the post-translational modification Sulfotyrosine. Glutamine 567 is modified (pyrrolidone carboxylic acid; in peptide BAM-1745). At serine 584 the chain carries Phosphoserine. The tract at residues 588 to 620 (PDFYDSEEQMSPQHTAENEEEKAGQGVLTEEEE) is disordered. Residue tyrosine 591 is modified to Sulfotyrosine. 2 positions are modified to phosphoserine: serine 593 and serine 598. At glutamine 634 the chain carries Pyrrolidone carboxylic acid; in Secretolytin; partial.

This sequence belongs to the chromogranin/secretogranin protein family. In terms of assembly, interacts with ITPR1 in the secretory granules. Post-translationally, O-glycosylated by the trisaccharide, GalNAc-Gal-NeuAc, on 2 sites in the N-terminal. May be glycated. In terms of processing, extensively phosphorylated. Differentially processed on numerous sites throughout the sequence depending on tissue type.

Its subcellular location is the cytoplasmic vesicle. It localises to the secretory vesicle membrane. The protein localises to the secreted. Functionally, secretogranin-1 is a neuroendocrine secretory granule protein, which may be the precursor for other biologically active peptides. The 16 pairs of basic AA distributed throughout its sequence may be used as proteolytic cleavage sites. In terms of biological role, secretolytin has antibacterial activity. This Bos taurus (Bovine) protein is Secretogranin-1 (CHGB).